Here is a 475-residue protein sequence, read N- to C-terminus: Ribulose bisphosphate carboxylase large chain (475 aa).

Residues 1–2 constitute a propeptide that is removed on maturation; it reads MS. Proline 3 carries the post-translational modification N-acetylproline. An N6,N6,N6-trimethyllysine modification is found at lysine 14. Asparagine 123 and threonine 173 together coordinate substrate. Catalysis depends on lysine 175, which acts as the Proton acceptor. Lysine 177 serves as a coordination point for substrate. Mg(2+) is bound by residues lysine 201, aspartate 203, and glutamate 204. Lysine 201 bears the N6-carboxylysine mark. Residue histidine 294 is the Proton acceptor of the active site. Arginine 295, histidine 327, and serine 379 together coordinate substrate.

Belongs to the RuBisCO large chain family. Type I subfamily. Heterohexadecamer of 8 large chains and 8 small chains; disulfide-linked. The disulfide link is formed within the large subunit homodimers. Requires Mg(2+) as cofactor. In terms of processing, the disulfide bond which can form in the large chain dimeric partners within the hexadecamer appears to be associated with oxidative stress and protein turnover.

It localises to the plastid. It is found in the chloroplast. The enzyme catalyses 2 (2R)-3-phosphoglycerate + 2 H(+) = D-ribulose 1,5-bisphosphate + CO2 + H2O. It carries out the reaction D-ribulose 1,5-bisphosphate + O2 = 2-phosphoglycolate + (2R)-3-phosphoglycerate + 2 H(+). Its function is as follows. RuBisCO catalyzes two reactions: the carboxylation of D-ribulose 1,5-bisphosphate, the primary event in carbon dioxide fixation, as well as the oxidative fragmentation of the pentose substrate in the photorespiration process. Both reactions occur simultaneously and in competition at the same active site. The chain is Ribulose bisphosphate carboxylase large chain from Stellaria media (Common chickweed).